The sequence spans 642 residues: Kinesin-2b (642 aa).

Positions 12 to 344 (NVMVMVRVRP…LRYADRAKQI (333 aa)) constitute a Kinesin motor domain. ATP is bound at residue 107 to 114 (GQTGSGKT). ADP is bound by residues G110, G112, K113, and T114. T114 serves as a coordination point for Mg(2+). Residues 415–475 (VQSLRKNLDK…ERKAKERQLM (61 aa)) adopt a coiled-coil conformation.

Belongs to the TRAFAC class myosin-kinesin ATPase superfamily. Kinesin family. Kinesin II subfamily.

The protein localises to the cell projection. It localises to the cilium. Its subcellular location is the flagellum. It is found in the cytoplasm. The protein resides in the cytoskeleton. The protein localises to the flagellum axoneme. It localises to the flagellum basal body. Its function is as follows. Involved in anterograde intraflagellar transport (IFT). Involved in flagellar assembly. The polypeptide is Kinesin-2b (Giardia intestinalis (strain ATCC 50803 / WB clone C6) (Giardia lamblia)).